Reading from the N-terminus, the 673-residue chain is UvrABC system protein B (673 aa).

The Helicase ATP-binding domain occupies 24 to 182; it reads EGVERNDPAQ…YSFVEILYNR (159 aa). Residue 37–44 participates in ATP binding; the sequence is GVTGSGKT. A Beta-hairpin motif is present at residues 90-113; it reads YYDYYQPEAFMPTSGLYIEKDLAI. Residues 429–591 form the Helicase C-terminal domain; that stretch reads QIDDLLDEIQ…ITPITVNKSK (163 aa). One can recognise a UVR domain in the interval 634 to 669; sequence TKMIDRAKKDMDKAAKDLDFVEAARYRDEMFALQKI.

The protein belongs to the UvrB family. In terms of assembly, forms a heterotetramer with UvrA during the search for lesions. Interacts with UvrC in an incision complex.

It is found in the cytoplasm. In terms of biological role, the UvrABC repair system catalyzes the recognition and processing of DNA lesions. A damage recognition complex composed of 2 UvrA and 2 UvrB subunits scans DNA for abnormalities. Upon binding of the UvrA(2)B(2) complex to a putative damaged site, the DNA wraps around one UvrB monomer. DNA wrap is dependent on ATP binding by UvrB and probably causes local melting of the DNA helix, facilitating insertion of UvrB beta-hairpin between the DNA strands. Then UvrB probes one DNA strand for the presence of a lesion. If a lesion is found the UvrA subunits dissociate and the UvrB-DNA preincision complex is formed. This complex is subsequently bound by UvrC and the second UvrB is released. If no lesion is found, the DNA wraps around the other UvrB subunit that will check the other stand for damage. In Cytophaga hutchinsonii (strain ATCC 33406 / DSM 1761 / CIP 103989 / NBRC 15051 / NCIMB 9469 / D465), this protein is UvrABC system protein B.